Consider the following 62-residue polypeptide: Large ribosomal subunit protein uL30 (62 aa).

Belongs to the universal ribosomal protein uL30 family. As to quaternary structure, part of the 50S ribosomal subunit.

The sequence is that of Large ribosomal subunit protein uL30 from Heliobacterium modesticaldum (strain ATCC 51547 / Ice1).